Here is a 133-residue protein sequence, read N- to C-terminus: Small ribosomal subunit protein uS8 (133 aa).

Belongs to the universal ribosomal protein uS8 family. As to quaternary structure, part of the 30S ribosomal subunit. Contacts proteins S5 and S12.

Functionally, one of the primary rRNA binding proteins, it binds directly to 16S rRNA central domain where it helps coordinate assembly of the platform of the 30S subunit. The sequence is that of Small ribosomal subunit protein uS8 from Trichormus variabilis (strain ATCC 29413 / PCC 7937) (Anabaena variabilis).